A 1172-amino-acid chain; its full sequence is DNA-directed RNA polymerases IV and V subunit 2 (1172 aa).

Asp-786 contributes to the Mg(2+) binding site. 4 residues coordinate Zn(2+): Cys-1108, Cys-1111, Cys-1133, and Cys-1136. The C4-type zinc finger occupies 1108-1136 (CRKCKTYANVIERTPSSGRKIRGPYCRVC).

Belongs to the RNA polymerase beta chain family. Component of the RNA polymerase IV and V complexes. Interacts with SSH1, NRPD1 and NRPE1. As to expression, mostly expressed in seedlings, flowers and roots, present ubiquitously, except in sperm cells.

The protein localises to the nucleus. It catalyses the reaction RNA(n) + a ribonucleoside 5'-triphosphate = RNA(n+1) + diphosphate. Functionally, DNA-dependent RNA polymerase catalyzes the transcription of DNA into RNA using the four ribonucleoside triphosphates as substrates. Second largest component of RNA polymerases IV and V which mediate short-interfering RNAs (siRNA) accumulation and subsequent RNA-directed DNA methylation-dependent (RdDM) transcriptional gene silencing (TGS) of endogenous repeated sequences, including transposable elements. Proposed to contribute to the polymerase catalytic activity and forms the polymerase active center together with the largest subunit. Also required for full erasure of methylation when the RNA trigger is withdrawn. Required for intercellular RNA interference (RNAi) leading to systemic post-transcriptional gene silencing. Involved in the maintenance of post-transcriptional RNA silencing. During interphase, mediates siRNA-independent heterochromatin association and methylation into chromocenters and condensation and cytosine methylation at pericentromeric major repeats. Required for complete maintenance of the 35S promoter homology-dependent TGS in transgenic plants and for the initial establishment of DNA methylation. The chain is DNA-directed RNA polymerases IV and V subunit 2 (NRPD2) from Arabidopsis thaliana (Mouse-ear cress).